The primary structure comprises 518 residues: Putative cytochrome P450 CYP13A7 (518 aa).

Residue C464 coordinates heme.

It belongs to the cytochrome P450 family. Requires heme as cofactor.

In terms of biological role, cytochromes P450 are a group of heme-thiolate monooxygenases. They oxidize a variety of structurally unrelated compounds, including steroids, fatty acids, and xenobiotics. The polypeptide is Putative cytochrome P450 CYP13A7 (cyp-13A7) (Caenorhabditis elegans).